Reading from the N-terminus, the 256-residue chain is 5'-nucleotidase SurE (256 aa).

A divalent metal cation contacts are provided by aspartate 8, aspartate 9, serine 40, and asparagine 92.

Belongs to the SurE nucleotidase family. The cofactor is a divalent metal cation.

The protein resides in the cytoplasm. The enzyme catalyses a ribonucleoside 5'-phosphate + H2O = a ribonucleoside + phosphate. Its function is as follows. Nucleotidase that shows phosphatase activity on nucleoside 5'-monophosphates. In Sinorhizobium medicae (strain WSM419) (Ensifer medicae), this protein is 5'-nucleotidase SurE.